Consider the following 92-residue polypeptide: Islet amyloid polypeptide (92 aa).

Positions 1-22 (MHISKLPAALLIFSVALNHLKA) are cleaved as a signal peptide. Positions 23-34 (TPVRSGTNHQMD) are excised as a propeptide. C38 and C43 are joined by a disulfide. Y73 is modified (tyrosine amide). Residues 77-92 (SAAEIPDGDSLDLFLL) constitute a propeptide that is removed on maturation.

It belongs to the calcitonin family. In terms of assembly, can form homodimers. Interacts with IDE and INS. Interaction with INS inhibits homodimerization and fibril formation.

The protein resides in the secreted. Amylin/IAPP is a glucoregulatory peptide hormone that plays an important role in the regulation of energy homeostasis. Selectively inhibits insulin-stimulated glucose utilization and glycogen deposition in muscle, while not affecting adipocyte glucose metabolism. IAPP function is mediated by the CALCR-RAMPs (AMYRs) receptor complexes. Amylin can also bind CALCR receptor in the absence of RAMPs, although it is more selective for AMYRs. This Mesocricetus auratus (Golden hamster) protein is Islet amyloid polypeptide (IAPP).